The following is a 689-amino-acid chain: Transketolase (689 aa).

H56 is a substrate binding site. Residues H96 and 144 to 146 (GNL) each bind thiamine diphosphate. A Mg(2+)-binding site is contributed by D185. The thiamine diphosphate site is built by G186 and N215. Mg(2+) contacts are provided by N215 and I217. H289, R380, and S407 together coordinate substrate. Residue H289 coordinates thiamine diphosphate. The active-site Proton donor is E434. Thiamine diphosphate is bound at residue F460. H484, D492, and R543 together coordinate substrate.

It belongs to the transketolase family. Homodimer. Requires Mg(2+) as cofactor. It depends on Ca(2+) as a cofactor. Mn(2+) is required as a cofactor. The cofactor is Co(2+). Thiamine diphosphate serves as cofactor.

It carries out the reaction D-sedoheptulose 7-phosphate + D-glyceraldehyde 3-phosphate = aldehydo-D-ribose 5-phosphate + D-xylulose 5-phosphate. Functionally, catalyzes the transfer of a two-carbon ketol group from a ketose donor to an aldose acceptor, via a covalent intermediate with the cofactor thiamine pyrophosphate. In Aquifex aeolicus (strain VF5), this protein is Transketolase (tkt).